Consider the following 269-residue polypeptide: Tryptophan synthase alpha chain (269 aa).

Residues glutamate 49 and aspartate 60 each act as proton acceptor in the active site.

It belongs to the TrpA family. As to quaternary structure, tetramer of two alpha and two beta chains.

The catalysed reaction is (1S,2R)-1-C-(indol-3-yl)glycerol 3-phosphate + L-serine = D-glyceraldehyde 3-phosphate + L-tryptophan + H2O. The protein operates within amino-acid biosynthesis; L-tryptophan biosynthesis; L-tryptophan from chorismate: step 5/5. Its function is as follows. The alpha subunit is responsible for the aldol cleavage of indoleglycerol phosphate to indole and glyceraldehyde 3-phosphate. The sequence is that of Tryptophan synthase alpha chain from Pseudomonas entomophila (strain L48).